The primary structure comprises 1196 residues: uncharacterized protein (1196 aa).

A helical transmembrane segment spans residues 27–47; that stretch reads ILLLLGSFILLNVWINVVTLL. Disordered regions lie at residues 150–345, 367–402, 669–762, 775–806, 826–877, 960–1009, and 1168–1196; these read GGGE…PQAH, SSVP…ASAP, TQDS…QKNT, CLTQ…DSGI, QATD…QDSE, YRSS…GPYK, and KCEA…DIRM. The span at 157-177 shows a compositional bias: polar residues; the sequence is VTASKAQASLLSRPETSSQFP. Composition is skewed to low complexity over residues 212-227 and 253-279; these read HSPT…HPWT and THSQ…TPAH. The span at 299 to 321 shows a compositional bias: polar residues; the sequence is HTSAQAQTHSPPHTPEYTHSQAH. Pro residues predominate over residues 391-402; that stretch reads APTPAPVPASAP. 4 stretches are compositionally biased toward polar residues: residues 733–742, 750–762, 787–804, and 826–849; these read YLCQNPSPSQ, SGIT…QKNT, PFTQ…TQDS, and QATD…TGNV. Positions 962–971 are enriched in basic and acidic residues; sequence SSEHSQDSNL.

Its subcellular location is the membrane. This is an uncharacterized protein from Homo sapiens (Human).